A 361-amino-acid polypeptide reads, in one-letter code: Phenylalanine 4-monooxygenase, chloroplastic (361 aa).

A chloroplast-targeting transit peptide spans 1 to 55 (MLALRQGALLLSARGGQTTHDNLQLCAGPSRRPRARWISSAPRPSTLVERHIRPQ). Positions 47–67 (LVERHIRPQASTASDATTSTS) are disordered. Residues 56-67 (ASTASDATTSTS) are compositionally biased toward low complexity. The Fe cation site is built by histidine 227, histidine 232, and glutamate 272.

This sequence belongs to the biopterin-dependent aromatic amino acid hydroxylase family. Fe(2+) is required as a cofactor.

The protein resides in the plastid. It is found in the chloroplast. The catalysed reaction is (6R)-L-erythro-5,6,7,8-tetrahydrobiopterin + L-phenylalanine + O2 = (4aS,6R)-4a-hydroxy-L-erythro-5,6,7,8-tetrahydrobiopterin + L-tyrosine. Catalyzes the hydroxylation of L-phenylalanine to L-tyrosine. Can functionally complement an Escherichia coli tyrosine auxotroph. This is Phenylalanine 4-monooxygenase, chloroplastic from Chlamydomonas reinhardtii (Chlamydomonas smithii).